Reading from the N-terminus, the 374-residue chain is Queuine tRNA-ribosyltransferase (374 aa).

Aspartate 89 acts as the Proton acceptor in catalysis. Substrate-binding positions include 89 to 93 (DSGGF), aspartate 143, glutamine 187, and glycine 214. Residues 245–251 (GVGKPED) form an RNA binding region. Catalysis depends on aspartate 264, which acts as the Nucleophile. Residues 269 to 273 (TRNAR) are RNA binding; important for wobble base 34 recognition. Cysteine 302, cysteine 304, cysteine 307, and histidine 333 together coordinate Zn(2+).

Belongs to the queuine tRNA-ribosyltransferase family. In terms of assembly, homodimer. Within each dimer, one monomer is responsible for RNA recognition and catalysis, while the other monomer binds to the replacement base PreQ1. Zn(2+) is required as a cofactor.

It carries out the reaction 7-aminomethyl-7-carbaguanine + guanosine(34) in tRNA = 7-aminomethyl-7-carbaguanosine(34) in tRNA + guanine. The protein operates within tRNA modification; tRNA-queuosine biosynthesis. Catalyzes the base-exchange of a guanine (G) residue with the queuine precursor 7-aminomethyl-7-deazaguanine (PreQ1) at position 34 (anticodon wobble position) in tRNAs with GU(N) anticodons (tRNA-Asp, -Asn, -His and -Tyr). Catalysis occurs through a double-displacement mechanism. The nucleophile active site attacks the C1' of nucleotide 34 to detach the guanine base from the RNA, forming a covalent enzyme-RNA intermediate. The proton acceptor active site deprotonates the incoming PreQ1, allowing a nucleophilic attack on the C1' of the ribose to form the product. After dissociation, two additional enzymatic reactions on the tRNA convert PreQ1 to queuine (Q), resulting in the hypermodified nucleoside queuosine (7-(((4,5-cis-dihydroxy-2-cyclopenten-1-yl)amino)methyl)-7-deazaguanosine). The chain is Queuine tRNA-ribosyltransferase from Shewanella baltica (strain OS185).